A 254-amino-acid chain; its full sequence is Type II restriction enzyme HpaI (254 aa).

The catalysed reaction is Endonucleolytic cleavage of DNA to give specific double-stranded fragments with terminal 5'-phosphates.. A P subtype restriction enzyme that recognizes the double-stranded sequence 5'-GTTAAC-3' and cleaves after T-3. This Haemophilus parainfluenzae protein is Type II restriction enzyme HpaI (hpaIR).